Consider the following 304-residue polypeptide: MATVIDRHSQPTWRDFLELTKPKVVVLMLITSLIGMLLATKAPLDGFVPWQVLIFGNLGIGLCAGAAAAVNHVVDRRIDSIMARTHKRPLAEGRVSPSMALGFALLLALAGMAVLLAFTNPLTAWLTLASLLGYAALYTGFLKRATPQNIVIGGLAGAAPPLLGWVAITGHLSAEPLLLVLIIFAWTPPHFWALCIHRKDEYAKADIPMLPVTHGERYTKLHILLYTLVLFAVSLMPFVIHMSGLVYLLCALALGARFLDWAWALYCDSRPHAAIKTFKYSIVYLFLLFMALLVDHYLPLKLLL.

Helical transmembrane passes span 24–44, 47–67, 99–119, 122–142, 150–170, 176–196, 228–248, and 280–300; these read VVVL…KAPL, FVPW…AGAA, MALG…LAFT, LTAW…TGFL, IVIG…AITG, PLLL…ALCI, LVLF…LVYL, and YSIV…YLPL.

It belongs to the UbiA prenyltransferase family. Protoheme IX farnesyltransferase subfamily.

Its subcellular location is the cell inner membrane. The enzyme catalyses heme b + (2E,6E)-farnesyl diphosphate + H2O = Fe(II)-heme o + diphosphate. It functions in the pathway porphyrin-containing compound metabolism; heme O biosynthesis; heme O from protoheme: step 1/1. Converts heme B (protoheme IX) to heme O by substitution of the vinyl group on carbon 2 of heme B porphyrin ring with a hydroxyethyl farnesyl side group. The polypeptide is Protoheme IX farnesyltransferase 1 (Pseudomonas aeruginosa (strain UCBPP-PA14)).